Here is a 481-residue protein sequence, read N- to C-terminus: Glutamyl-tRNA(Gln) amidotransferase subunit A (481 aa).

Residues K74 and S149 each act as charge relay system in the active site. The Acyl-ester intermediate role is filled by S173.

The protein belongs to the amidase family. GatA subfamily. In terms of assembly, heterotrimer of A, B and C subunits.

The enzyme catalyses L-glutamyl-tRNA(Gln) + L-glutamine + ATP + H2O = L-glutaminyl-tRNA(Gln) + L-glutamate + ADP + phosphate + H(+). Functionally, allows the formation of correctly charged Gln-tRNA(Gln) through the transamidation of misacylated Glu-tRNA(Gln) in organisms which lack glutaminyl-tRNA synthetase. The reaction takes place in the presence of glutamine and ATP through an activated gamma-phospho-Glu-tRNA(Gln). The chain is Glutamyl-tRNA(Gln) amidotransferase subunit A from Francisella tularensis subsp. mediasiatica (strain FSC147).